A 53-amino-acid polypeptide reads, in one-letter code: UPF0391 membrane protein YPDSF_3201 (53 aa).

Transmembrane regions (helical) follow at residues Trp4–Ala24 and Ala27–Phe47.

This sequence belongs to the UPF0391 family.

It is found in the cell membrane. The chain is UPF0391 membrane protein YPDSF_3201 from Yersinia pestis (strain Pestoides F).